The primary structure comprises 664 residues: Acid beta-fructofuranosidase 4, vacuolar (664 aa).

Residues 1 to 43 (MASSDALLPISAREEEPLCPYTRLPMADPNQETHGPRRRRPFK) lie on the Cytoplasmic side of the membrane. The propeptide at 1 to 108 (MASSDALLPI…WKLSGDRNTP (108 aa)) is removed in mature form. Short sequence motifs (critical for endoplasmic reticulum export) lie at residues 7 to 8 (LL) and 9 to 10 (PI). The Critical for trafficking from the trans-Golgi network to the prevacuolar compartment and from the prevacuolar compartment to the central vacuole motif lies at 14-16 (EEE). Residues 44–64 (GLLAVSFGLLFIAFYVALIAT) form a helical; Signal-anchor for type II membrane protein membrane-spanning segment. The Lumenal portion of the chain corresponds to 65–664 (HDGSRSNDEG…DEAVRALSRT (600 aa)). A glycan (N-linked (GlcNAc...) asparagine) is linked at asparagine 113. Substrate contacts are provided by residues 132-135 (WMND), glutamine 151, tryptophan 159, 194-195 (WT), and 258-259 (RD). The active site involves aspartate 135. Residue asparagine 280 is glycosylated (N-linked (GlcNAc...) (complex) asparagine). Substrate is bound by residues glutamate 313 and aspartate 346. Residues asparagine 362 and asparagine 498 are each glycosylated (N-linked (GlcNAc...) asparagine). Cysteine 510 and cysteine 558 are joined by a disulfide.

The protein belongs to the glycosyl hydrolase 32 family. As to quaternary structure, may be present in two forms, a 70 kDa monomer and a heterodimer of the 30 kDa and 38 kDa subunits. The ratio of the levels of the two forms within cells appears to be regulated developmentally. As to expression, mostly expressed in stems, roots and flowers, and, to a lower extent, in mature leaves.

The protein resides in the vacuole. It is found in the endoplasmic reticulum membrane. The protein localises to the golgi apparatus membrane. Its subcellular location is the golgi apparatus. It localises to the trans-Golgi network membrane. The protein resides in the prevacuolar compartment membrane. It is found in the vacuole membrane. The protein localises to the vacuole lumen. It carries out the reaction Hydrolysis of terminal non-reducing beta-D-fructofuranoside residues in beta-D-fructofuranosides.. The protein operates within glycan biosynthesis; sucrose metabolism. With respect to regulation, inhibited by C/VIF1 and C/VIF2. In terms of biological role, possible role in the continued mobilization of sucrose to sink organs. Regulates root elongation. This chain is Acid beta-fructofuranosidase 4, vacuolar, found in Arabidopsis thaliana (Mouse-ear cress).